The following is a 63-amino-acid chain: Parvalbumin alpha (63 aa).

EF-hand domains follow at residues 28–38 and 39–63; these read IEEEELGLILK and VLLAAGDKDGDGKIGVDEFVTLVSE. 7 residues coordinate Ca(2+): glutamate 29, glutamate 32, aspartate 45, aspartate 47, aspartate 49, lysine 51, and glutamate 56.

As to expression, detected in muscle and cutaneous mucus. In the skin, detected in cells in the basal region of the glandular epithelium of the dermal mucus glands (at protein level).

Its subcellular location is the cytoplasm. It localises to the secreted. In muscle, parvalbumin is thought to be involved in relaxation after contraction. It binds two calcium ions. This is Parvalbumin alpha from Rana temporaria (European common frog).